A 55-amino-acid polypeptide reads, in one-letter code: ATP synthase F(0) complex subunit 8 (55 aa).

A helical transmembrane segment spans residues 8 to 24; sequence PWFMIMLMTWFTYSLLI.

It belongs to the ATPase protein 8 family. As to quaternary structure, component of the ATP synthase complex composed at least of ATP5F1A/subunit alpha, ATP5F1B/subunit beta, ATP5MC1/subunit c (homooctomer), MT-ATP6/subunit a, MT-ATP8/subunit 8, ATP5ME/subunit e, ATP5MF/subunit f, ATP5MG/subunit g, ATP5MK/subunit k, ATP5MJ/subunit j, ATP5F1C/subunit gamma, ATP5F1D/subunit delta, ATP5F1E/subunit epsilon, ATP5PF/subunit F6, ATP5PB/subunit b, ATP5PD/subunit d, ATP5PO/subunit OSCP. ATP synthase complex consists of a soluble F(1) head domain (subunits alpha(3) and beta(3)) - the catalytic core - and a membrane F(0) domain - the membrane proton channel (subunits c, a, 8, e, f, g, k and j). These two domains are linked by a central stalk (subunits gamma, delta, and epsilon) rotating inside the F1 region and a stationary peripheral stalk (subunits F6, b, d, and OSCP).

It localises to the mitochondrion membrane. Functionally, subunit 8, of the mitochondrial membrane ATP synthase complex (F(1)F(0) ATP synthase or Complex V) that produces ATP from ADP in the presence of a proton gradient across the membrane which is generated by electron transport complexes of the respiratory chain. ATP synthase complex consist of a soluble F(1) head domain - the catalytic core - and a membrane F(1) domain - the membrane proton channel. These two domains are linked by a central stalk rotating inside the F(1) region and a stationary peripheral stalk. During catalysis, ATP synthesis in the catalytic domain of F(1) is coupled via a rotary mechanism of the central stalk subunits to proton translocation. In vivo, can only synthesize ATP although its ATP hydrolase activity can be activated artificially in vitro. Part of the complex F(0) domain. This is ATP synthase F(0) complex subunit 8 from Coturnix japonica (Japanese quail).